Consider the following 349-residue polypeptide: Green-sensitive opsin-2 (349 aa).

Topologically, residues 1–36 (MNGTEGNNFYVPLSNRTGLVRSPFEYPQYYLAEPWQ) are extracellular. N-linked (GlcNAc...) asparagine glycosylation is found at Asn-2 and Asn-15. A helical membrane pass occupies residues 37 to 61 (FKLLAVYMFFLICLGLPINGLTLIC). Residues 62-73 (TAQHKKLRQPLN) lie on the Cytoplasmic side of the membrane. The chain crosses the membrane as a helical span at residues 74-99 (FILVNLAVAGAIMVCFGFTVTFYTAI). Residues 100 to 113 (NGYFALGPTGCAVE) are Extracellular-facing. Cysteines 110 and 187 form a disulfide. The chain crosses the membrane as a helical span at residues 114 to 133 (GFMATLGGEVALWSLVVLAI). Over 134–152 (ERYIVVCKPMGSFKFSSTH) the chain is Cytoplasmic. The helical transmembrane segment at 153 to 176 (ASAGIAFTWVMAMACAAPPLVGWS) threads the bilayer. Topologically, residues 177–202 (RYIPEGIQCSCGPDYYTLNPEYNNES) are extracellular. A helical transmembrane segment spans residues 203-230 (YVLYMFICHFILPVTIIFFTYGRLVCTV). The Cytoplasmic segment spans residues 231-252 (KAAAAQQQDSASTQKAEREVTK). Residues 253–276 (MVILMVLGFLVAWTPYATVAAWIF) traverse the membrane as a helical segment. Topologically, residues 277–284 (FNKGAAFS) are extracellular. A helical transmembrane segment spans residues 285–309 (AQFMAIPAFFSKTSALYNPVIYVLL). Lys-296 carries the post-translational modification N6-(retinylidene)lysine. At 310–349 (NKQFRSCMLTTLFCGKNPLGDEESSTVSTSKTEVSSVSPA) the chain is on the cytoplasmic side. Residues 329 to 349 (GDEESSTVSTSKTEVSSVSPA) form a disordered region. A compositionally biased stretch (low complexity) spans 334-349 (STVSTSKTEVSSVSPA).

It belongs to the G-protein coupled receptor 1 family. Opsin subfamily. Phosphorylated on some or all of the serine and threonine residues present in the C-terminal region. In terms of tissue distribution, the color pigments are found in the cone photoreceptor cells.

Its subcellular location is the membrane. Visual pigments are the light-absorbing molecules that mediate vision. They consist of an apoprotein, opsin, covalently linked to cis-retinal. The sequence is that of Green-sensitive opsin-2 from Carassius auratus (Goldfish).